Reading from the N-terminus, the 329-residue chain is Malate dehydrogenase (329 aa).

Residue 11–17 (GAAGQIA) coordinates NAD(+). Positions 92 and 98 each coordinate substrate. NAD(+) is bound by residues Asn105, Gln112, and 129–131 (VGN). Substrate is bound by residues Asn131 and Arg162. The Proton acceptor role is filled by His187.

The protein belongs to the LDH/MDH superfamily. MDH type 2 family.

The enzyme catalyses (S)-malate + NAD(+) = oxaloacetate + NADH + H(+). Catalyzes the reversible oxidation of malate to oxaloacetate. In Akkermansia muciniphila (strain ATCC BAA-835 / DSM 22959 / JCM 33894 / BCRC 81048 / CCUG 64013 / CIP 107961 / Muc), this protein is Malate dehydrogenase.